The sequence spans 55 residues: Small ribosomal subunit protein uS14 (55 aa).

Residues Cys20, Cys23, Cys38, and Cys41 each coordinate Zn(2+).

Belongs to the universal ribosomal protein uS14 family. Zn(2+) serves as cofactor.

The protein is Small ribosomal subunit protein uS14 (rps29) of Dictyostelium discoideum (Social amoeba).